The following is a 321-amino-acid chain: Gibberellin 2-beta-dioxygenase 4 (321 aa).

Residues 156–269 (DSDSVLRVNH…RLSTAYFAGP (114 aa)) form the Fe2OG dioxygenase domain. Residues histidine 193, aspartate 195, and histidine 250 each coordinate Fe cation. Residue arginine 260 is part of the active site.

This sequence belongs to the iron/ascorbate-dependent oxidoreductase family. GA2OX subfamily. It depends on Fe(2+) as a cofactor. As to expression, expressed at the base of the shoot apical meristem and developing leaf primordia.

The enzyme catalyses gibberellin A1 + 2-oxoglutarate + O2 = gibberellin A8 + succinate + CO2. It participates in plant hormone biosynthesis; gibberellin biosynthesis. Catalyzes the 2-beta-hydroxylation of several biologically active gibberellins, leading to the homeostatic regulation of their endogenous level. Catabolism of gibberellins (GAs) plays a central role in plant development. Converts GA9/GA20 to GA51/GA29 and GA4/GA1 to GA34/GA8. The chain is Gibberellin 2-beta-dioxygenase 4 (GA2OX4) from Arabidopsis thaliana (Mouse-ear cress).